Consider the following 360-residue polypeptide: MTRSTTPPMRAKHSSAKRSPSRSAAKVNPVSVKPNKPLLSKALHPRNAHLQGYDFATLIIAMPALAAFVRPNPYGNPSIDFADPKAVKSLNAALLLSEYHINGWDIPEGYLCPPVPGRVDYLHYIADLLAVKGKVVKGASIRGLDIGTGANGIYPLLGIQTYGWQFVASDIDPVSIDNVAKIAQQNEKITAHLQLRLQPQPEHIFKNIIAADERFDVTLCNPPFHSSLAEASEGSLRKVKNLAKNQQQKHGQQSRKLAVSQAKPTLNFGGQKAELWCQGGEQQFLANMIKQSRDYANQVLWFTSLVSKSDNLKPCYQLLKQLNAVEVKTIEMTQGNKATRILAWSFLTPAIHQQWATLRP.

The disordered stretch occupies residues 1 to 38 (MTRSTTPPMRAKHSSAKRSPSRSAAKVNPVSVKPNKPL). The segment covering 10-20 (RAKHSSAKRSP) has biased composition (basic residues).

Belongs to the methyltransferase superfamily. METTL16/RlmF family.

It localises to the cytoplasm. It carries out the reaction adenosine(1618) in 23S rRNA + S-adenosyl-L-methionine = N(6)-methyladenosine(1618) in 23S rRNA + S-adenosyl-L-homocysteine + H(+). In terms of biological role, specifically methylates the adenine in position 1618 of 23S rRNA. This Shewanella frigidimarina (strain NCIMB 400) protein is Ribosomal RNA large subunit methyltransferase F.